We begin with the raw amino-acid sequence, 201 residues long: MQSVSIEAIKRDTGKNAARRLKNQGYIPAILYGKGMAESIPLAVEYNKLQRLLQKHGRNVLLNVIVDGSTHNAVIKEIQEDTLKGKIIHVDFQRVSMYEEIEATVPLKFEGTGLIESRGGIVQHQLWELTVESLPDKIPQEIVVDLSNLEIGDTLFVKDIQVPEGVKVVDDPDEIVVSVLAPRESEEEAEEEATETAKESE.

The interval 181 to 201 (APRESEEEAEEEATETAKESE) is disordered. Acidic residues predominate over residues 185–194 (SEEEAEEEAT).

Belongs to the bacterial ribosomal protein bL25 family. CTC subfamily. As to quaternary structure, part of the 50S ribosomal subunit; part of the 5S rRNA/L5/L18/L25 subcomplex. Contacts the 5S rRNA. Binds to the 5S rRNA independently of L5 and L18.

Functionally, this is one of the proteins that binds to the 5S RNA in the ribosome where it forms part of the central protuberance. This Thermoanaerobacter pseudethanolicus (strain ATCC 33223 / 39E) (Clostridium thermohydrosulfuricum) protein is Large ribosomal subunit protein bL25.